The primary structure comprises 532 residues: Mitogen-activated protein kinase kinase mkk1 (532 aa).

In terms of domain architecture, Protein kinase spans Ile235–Met505. Residues Leu241–Val249 and Lys264 each bind ATP. The active-site Proton acceptor is the Asp362.

It belongs to the protein kinase superfamily. STE Ser/Thr protein kinase family. MAP kinase kinase subfamily.

It catalyses the reaction L-seryl-[protein] + ATP = O-phospho-L-seryl-[protein] + ADP + H(+). The catalysed reaction is L-threonyl-[protein] + ATP = O-phospho-L-threonyl-[protein] + ADP + H(+). Mitogen-activated protein kinase kinase, part of the mkh1-mkk1-spm1 MAPK cascade that regulates regulates vegetative growth, conidial formation, colony surface hydrophobicity, osmotic stress, cell wall integrity maintenance, carbon and nitrogen source utilization, chitin distribution, septa formation, and pathogenicity. This is Mitogen-activated protein kinase kinase mkk1 from Cytospora mali (Apple Valsa canker fungus).